The sequence spans 394 residues: Chalcone synthase 4 (394 aa).

Cys165 is an active-site residue.

It belongs to the thiolase-like superfamily. Chalcone/stilbene synthases family.

It catalyses the reaction (E)-4-coumaroyl-CoA + 3 malonyl-CoA + 3 H(+) = 2',4,4',6'-tetrahydroxychalcone + 3 CO2 + 4 CoA. Its pathway is secondary metabolite biosynthesis; flavonoid biosynthesis. The primary product of this enzyme is 4,2',4',6'-tetrahydroxychalcone (also termed naringenin-chalcone or chalcone) which can under specific conditions spontaneously isomerize into naringenin. The chain is Chalcone synthase 4 (CHS4) from Bromheadia finlaysoniana (Orchid).